A 407-amino-acid polypeptide reads, in one-letter code: Peptidase T (407 aa).

Histidine 82 contacts Zn(2+). Aspartate 84 is a catalytic residue. Aspartate 143 contributes to the Zn(2+) binding site. Glutamate 177 (proton acceptor) is an active-site residue. Positions 178, 200, and 382 each coordinate Zn(2+).

The protein belongs to the peptidase M20B family. Zn(2+) serves as cofactor.

It localises to the cytoplasm. The enzyme catalyses Release of the N-terminal residue from a tripeptide.. In terms of biological role, cleaves the N-terminal amino acid of tripeptides. The polypeptide is Peptidase T (Streptococcus equi subsp. equi (strain 4047)).